We begin with the raw amino-acid sequence, 255 residues long: Hydroxyacylglutathione hydrolase (255 aa).

The Zn(2+) site is built by H56, H58, D60, H61, H112, D129, and H167.

Belongs to the metallo-beta-lactamase superfamily. Glyoxalase II family. Monomer. The cofactor is Zn(2+).

The catalysed reaction is an S-(2-hydroxyacyl)glutathione + H2O = a 2-hydroxy carboxylate + glutathione + H(+). It functions in the pathway secondary metabolite metabolism; methylglyoxal degradation; (R)-lactate from methylglyoxal: step 2/2. Functionally, thiolesterase that catalyzes the hydrolysis of S-D-lactoyl-glutathione to form glutathione and D-lactic acid. The polypeptide is Hydroxyacylglutathione hydrolase (Pseudomonas fluorescens (strain SBW25)).